A 292-amino-acid chain; its full sequence is Elongation factor Ts (292 aa).

An involved in Mg(2+) ion dislocation from EF-Tu region spans residues 79–82 (TDFV).

It belongs to the EF-Ts family.

The protein resides in the cytoplasm. Its function is as follows. Associates with the EF-Tu.GDP complex and induces the exchange of GDP to GTP. It remains bound to the aminoacyl-tRNA.EF-Tu.GTP complex up to the GTP hydrolysis stage on the ribosome. This is Elongation factor Ts from Xanthomonas campestris pv. campestris (strain B100).